The primary structure comprises 507 residues: Protein O-glucosyltransferase 3 (507 aa).

An N-terminal signal peptide occupies residues 1–20 (MRRLPRALLLQLRLALLVAA). A Filamin repeat occupies 24 to 134 (EVLVSAPRSL…VAQSPYILKG (111 aa)). Residues Asn-61 and Asn-306 are each glycosylated (N-linked (GlcNAc...) asparagine). The short motif at 504 to 507 (REEL) is the Prevents secretion from ER element.

This sequence belongs to the KDELC family.

It localises to the endoplasmic reticulum lumen. The enzyme catalyses L-seryl-[EGF-like domain protein] + UDP-alpha-D-glucose = 3-O-(beta-D-glucosyl)-L-seryl-[EGF-like domain protein] + UDP + H(+). It catalyses the reaction L-seryl-[EGF-like domain protein] + UDP-alpha-D-xylose = 3-O-(beta-D-xylosyl)-L-seryl-[EGF-like domain protein] + UDP + H(+). It participates in protein modification; protein glycosylation. Its function is as follows. Protein glucosyltransferase that catalyzes the transfer of glucose from UDP-glucose to a serine residue within the consensus sequence peptide C-X-N-T-X-G-S-F-X-C. Can also catalyze the transfer of xylose from UDP-xylose but less efficiently. Specifically targets extracellular EGF repeats of proteins such as NOTCH1, NOTCH3, FBN1, FBN2 and LTBP1. May regulate the transport of NOTCH1 and NOTCH3 to the plasma membrane and thereby the Notch signaling pathway. This chain is Protein O-glucosyltransferase 3, found in Homo sapiens (Human).